A 253-amino-acid polypeptide reads, in one-letter code: 3-deoxy-manno-octulosonate cytidylyltransferase (253 aa).

Belongs to the KdsB family.

It is found in the cytoplasm. It catalyses the reaction 3-deoxy-alpha-D-manno-oct-2-ulosonate + CTP = CMP-3-deoxy-beta-D-manno-octulosonate + diphosphate. It participates in nucleotide-sugar biosynthesis; CMP-3-deoxy-D-manno-octulosonate biosynthesis; CMP-3-deoxy-D-manno-octulosonate from 3-deoxy-D-manno-octulosonate and CTP: step 1/1. It functions in the pathway bacterial outer membrane biogenesis; lipopolysaccharide biosynthesis. Its function is as follows. Activates KDO (a required 8-carbon sugar) for incorporation into bacterial lipopolysaccharide in Gram-negative bacteria. The chain is 3-deoxy-manno-octulosonate cytidylyltransferase from Acinetobacter baumannii (strain AYE).